We begin with the raw amino-acid sequence, 137 residues long: Peptide methionine sulfoxide reductase MsrB (137 aa).

A MsrB domain is found at 7 to 129 (AEELKKKLSE…NSASLAFSDE (123 aa)). Residues cysteine 46, cysteine 49, cysteine 95, and cysteine 98 each coordinate Zn(2+). Cysteine 118 functions as the Nucleophile in the catalytic mechanism.

Belongs to the MsrB Met sulfoxide reductase family. The cofactor is Zn(2+).

The catalysed reaction is L-methionyl-[protein] + [thioredoxin]-disulfide + H2O = L-methionyl-(R)-S-oxide-[protein] + [thioredoxin]-dithiol. The polypeptide is Peptide methionine sulfoxide reductase MsrB (Salmonella dublin (strain CT_02021853)).